The following is a 425-amino-acid chain: Receptor-like protein 55 (425 aa).

An N-terminal signal peptide occupies residues 1–25; it reads MKPQQPQPPLLLLLLLPLLLTTVSS. The Extracellular segment spans residues 26-397; the sequence is YPLNPKQLKA…EEEHKGSNKT (372 aa). Asparagine 40, asparagine 54, asparagine 79, and asparagine 132 each carry an N-linked (GlcNAc...) asparagine glycan. LRR repeat units follow at residues 144–169, 170–193, 195–216, 217–240, 242–264, 265–287, and 288–313; these read LKNL…ILGN, MHKL…SFHS, LRYI…ITRL, KNLK…IKSL, FLKN…LSSI, SELT…FFSE, and MKNL…SFIK. Asparagine 182, asparagine 202, asparagine 223, asparagine 245, asparagine 278, asparagine 308, and asparagine 329 each carry an N-linked (GlcNAc...) asparagine glycan. Positions 355-389 are disordered; sequence PSQKEESLSGENDYDVEGGNEEKTENLKTKEEEEE. The segment covering 374-389 has biased composition (basic and acidic residues); it reads NEEKTENLKTKEEEEE. N-linked (GlcNAc...) asparagine glycosylation occurs at asparagine 395. The chain crosses the membrane as a helical span at residues 398 to 418; that stretch reads LFGLGIGLFSLVFLILFLFYL. Over 419–425 the chain is Cytoplasmic; sequence AKRCRLI.

The protein belongs to the RLP family.

It is found in the cell membrane. Its function is as follows. Involved in plant defense. In Arabidopsis thaliana (Mouse-ear cress), this protein is Receptor-like protein 55.